The following is a 714-amino-acid chain: Polyribonucleotide nucleotidyltransferase (714 aa).

D493 and D499 together coordinate Mg(2+). In terms of domain architecture, KH spans 559 to 618; that stretch reads PRIETTKIPADRIGELIGPGGKNIKAIQAESGADINIEEDGTVHIYAAKQEGLDRALELV. An S1 motif domain is found at 628–696; that stretch reads GELYTGKIVS…DKGRVKMSIR (69 aa).

Belongs to the polyribonucleotide nucleotidyltransferase family. Mg(2+) is required as a cofactor.

Its subcellular location is the cytoplasm. It catalyses the reaction RNA(n+1) + phosphate = RNA(n) + a ribonucleoside 5'-diphosphate. In terms of biological role, involved in mRNA degradation. Catalyzes the phosphorolysis of single-stranded polyribonucleotides processively in the 3'- to 5'-direction. The polypeptide is Polyribonucleotide nucleotidyltransferase (Akkermansia muciniphila (strain ATCC BAA-835 / DSM 22959 / JCM 33894 / BCRC 81048 / CCUG 64013 / CIP 107961 / Muc)).